We begin with the raw amino-acid sequence, 327 residues long: Nocardicin C-9' epimerase (327 aa).

Residue K43 is modified to N6-(pyridoxal phosphate)lysine.

Belongs to the ACC deaminase/D-cysteine desulfhydrase family. It depends on pyridoxal 5'-phosphate as a cofactor.

It catalyses the reaction isonocardicin C = nocardicin C. The catalysed reaction is isonocardicin A = nocardicin A. The protein operates within antibiotic biosynthesis. In terms of biological role, involved in the biosynthesis of the beta-lactam antibiotic nocardicin A. Catalyzes the interconversion of the nocardicin homoseryl side chain in both nocardicin A with isonocardicin A, and nocardicin C with isonocardicin C. This Nocardia uniformis subsp. tsuyamanensis protein is Nocardicin C-9' epimerase.